The chain runs to 293 residues: MDSQLANPPNAFNYIESQRDEYQLSHDLTEIILQFPSTASQLSARFSRSCMKIDHCVIEYRQQVPINATGSVVVEIHDKRMTDNESLQASWTFPIRCNIDLHYFSSSFFSLKDPIPWKLYYRVSDTNVHQRTHFAKFKGKLKLSTAKHSVDIPFRAPTVKILSKQFSNKDIDFSHVDYGKWERKLIRSASLSKYGLQGPIELKPGESWASKSTIGVSHLDADSDLDSAIHPYKNLNRLGSSVLDPGDSASIIGAQRAQSNITLSIAQLNEIVRSTVNECINNNCIHVQPKSLK.

It belongs to the begomovirus movement protein BC1 family. Binds to dimeric supercoiled plasmid DNA. Post-translationally, phosphorylated.

The protein localises to the host cell membrane. It is found in the host microsome membrane. It localises to the host endoplasmic reticulum membrane. Transports viral genome to neighboring plant cells directly through plasmosdesmata, without any budding. The movement protein allows efficient cell to cell propagation, by bypassing the host cell wall barrier. Begomovirus genome is shuttled out of nucleus by Nuclear shuttle protein (NSP) and the movement protein transports the DNA-NSP complex to cell plasmodesmata and facilitates further movement across the cell wall. The polypeptide is Movement protein BC1 (Macroptilium lathyroides (Lima bean)).